Here is a 202-residue protein sequence, read N- to C-terminus: Small ribosomal subunit protein uS4c (202 aa).

The 64-residue stretch at 90 to 153 (MRLDNVIFRL…KSEAIISKNI (64 aa)) folds into the S4 RNA-binding domain.

This sequence belongs to the universal ribosomal protein uS4 family. In terms of assembly, part of the 30S ribosomal subunit. Contacts protein S5. The interaction surface between S4 and S5 is involved in control of translational fidelity.

Its subcellular location is the plastid. The protein localises to the chloroplast. In terms of biological role, one of the primary rRNA binding proteins, it binds directly to 16S rRNA where it nucleates assembly of the body of the 30S subunit. With S5 and S12 plays an important role in translational accuracy. In Cyathophorum bulbosum (Moss), this protein is Small ribosomal subunit protein uS4c (rps4).